The following is a 637-amino-acid chain: Probable ATP-binding protein YheS (637 aa).

ABC transporter domains lie at 2-246 (IVFS…AQQQ) and 313-527 (LKME…KQEN). Residues 34–41 (GKNGCGKS) and 345–352 (GRNGAGKS) contribute to the ATP site. The interval 523 to 559 (QKQENQTDEAPKENANSAQARKDQKRREAELRAQTQP) is disordered. Basic and acidic residues predominate over residues 542 to 553 (ARKDQKRREAEL).

Belongs to the ABC transporter superfamily. ABCF family. YheS subfamily.

In terms of biological role, genetic data indicate it may be involved in ribosome assembly or function. The chain is Probable ATP-binding protein YheS (yheS) from Escherichia coli O157:H7.